Reading from the N-terminus, the 980-residue chain is Chitin binding domain containing chtb-2 (980 aa).

Residues 1–20 (MRTMHCFLFILLFCLGQVFT) form the signal peptide. N187 and N190 each carry an N-linked (GlcNAc...) asparagine glycan. 3 disordered regions span residues 310–354 (ERQQ…AELD), 431–451 (QEEE…QIRQ), and 486–512 (EILR…QQEA). N-linked (GlcNAc...) asparagine glycosylation is found at N941 and N975.

This is Chitin binding domain containing chtb-2 from Caenorhabditis elegans.